The sequence spans 310 residues: Lipoyl synthase (310 aa).

Positions 51, 56, 62, 77, 81, 84, and 290 each coordinate [4Fe-4S] cluster. A Radical SAM core domain is found at 63 to 280 (WSRKTATYLA…RRVGESLGLF (218 aa)).

Belongs to the radical SAM superfamily. Lipoyl synthase family. The cofactor is [4Fe-4S] cluster.

The protein resides in the cytoplasm. The catalysed reaction is [[Fe-S] cluster scaffold protein carrying a second [4Fe-4S](2+) cluster] + N(6)-octanoyl-L-lysyl-[protein] + 2 oxidized [2Fe-2S]-[ferredoxin] + 2 S-adenosyl-L-methionine + 4 H(+) = [[Fe-S] cluster scaffold protein] + N(6)-[(R)-dihydrolipoyl]-L-lysyl-[protein] + 4 Fe(3+) + 2 hydrogen sulfide + 2 5'-deoxyadenosine + 2 L-methionine + 2 reduced [2Fe-2S]-[ferredoxin]. The protein operates within protein modification; protein lipoylation via endogenous pathway; protein N(6)-(lipoyl)lysine from octanoyl-[acyl-carrier-protein]: step 2/2. Its function is as follows. Catalyzes the radical-mediated insertion of two sulfur atoms into the C-6 and C-8 positions of the octanoyl moiety bound to the lipoyl domains of lipoate-dependent enzymes, thereby converting the octanoylated domains into lipoylated derivatives. The polypeptide is Lipoyl synthase (Chlamydia abortus (strain DSM 27085 / S26/3) (Chlamydophila abortus)).